We begin with the raw amino-acid sequence, 641 residues long: Sodium-dependent nutrient amino acid transporter 1 (641 aa).

The disordered stretch occupies residues 1–38 (MELKGVQPSNGSSNGSGNGATNAASTEKTDAEKPTAER). At 1-40 (MELKGVQPSNGSSNGSGNGATNAASTEKTDAEKPTAERTN) the chain is on the cytoplasmic side. Residues 9–26 (SNGSSNGSGNGATNAAST) show a composition bias toward low complexity. The segment covering 27 to 36 (EKTDAEKPTA) has biased composition (basic and acidic residues). The next 3 membrane-spanning stretches (helical) occupy residues 41–61 (WGNGLEFLMSCISVSVGLGNV), 74–94 (GAFLIPYIIVLFLIGKPMYYL), and 111–131 (SVVPGFVGVGYGQAFGTICII). N-linked (GlcNAc...) asparagine glycosylation is found at N185 and N190. The next 9 membrane-spanning stretches (helical) occupy residues 229-249 (PDWKLTLALFVAWVVIFLVIM), 258-278 (AAYFLALFPYVVLFVLLIRAV), 307-327 (AVVQCFFSLAVGSGPIIMFAS), 341-361 (IVTTLDTLTSLLGGITIFAIL), 401-421 (LFSVLFFFMLFVLGIGSIVAL), 447-467 (VCGFLMGLVYVTPGGQWILTL), 474-494 (TYVVFILAIFELAGIVWVYGL), 516-536 (CWSFFTPVMMIIIFIYSMVTI), and 552-572 (IAGWLLFAIGAAQFPLWGLWY).

This sequence belongs to the sodium:neurotransmitter symporter (SNF) (TC 2.A.22) family. In terms of tissue distribution, in larvae, weak specific expression in the anterior midgut just proximal to the gastric caeca reproductive rudiments, common ureters of the Malpighian tubules, and distal swollen portion of the anterior pair of Malpighian tubules. Expression is also seen in the imaginal disks of the head; brain hemispheres and the ventral ganglion. Stronger expression in the posterior midgut.

Its subcellular location is the membrane. Its function is as follows. Unusual broad substrate spectrum amino acid:sodium cotransporter that promotes absorption of the D isomers of essential amino acids. Neutral amino acids are the preferred substrates, especially methionine and phenylalanine. The chain is Sodium-dependent nutrient amino acid transporter 1 (NAAT1) from Drosophila melanogaster (Fruit fly).